Here is a 1500-residue protein sequence, read N- to C-terminus: Myosin-8 (1500 aa).

A Myosin N-terminal SH3-like domain is found at 8 to 57 (AVGSHVWVEDPDEAWLDGEVVEINGDQIKVLCASGKQVVVKDSNIYPKDV). The Myosin motor domain maps to 62 to 732 (SGVEDMTRLA…QMADLDTRRT (671 aa)). ATP-binding positions include 156 to 163 (GESGAGKT) and 210 to 218 (NNNSSRFGK). 4 actin-binding regions span residues 496-530 (LIEK…YQTY), 532-555 (NHKR…AGDV), 590-613 (FPPV…KQQL), and 613-635 (LVSL…KPNN). IQ domains follow at residues 735 to 764 (LGRS…SATQ), 758 to 787 (LRIS…EAAA), 783 to 812 (REAA…ATIL), 806 to 835 (LFSA…TKAA), 831 to 860 (QTKA…AAIT), and 854 to 883 (LKKA…AARE). A coiled-coil region spans residues 884–1049 (TGALQEAKNK…TEKQIMLQQT (166 aa)). Residues 1146 to 1447 (DRLIEMIGSA…ISSMRALMTE (302 aa)) enclose the Dilute domain.

This sequence belongs to the TRAFAC class myosin-kinesin ATPase superfamily. Myosin family. Plant myosin class XI subfamily. In terms of assembly, homodimer.

The protein localises to the cytoplasm. Myosin heavy chain that is required for the cell cycle-regulated transport of various organelles and proteins for their segregation. Functions by binding with its tail domain to receptor proteins on organelles and exerting force with its N-terminal motor domain against actin filaments, thereby transporting its cargo along polarized actin cables. In Arabidopsis thaliana (Mouse-ear cress), this protein is Myosin-8 (XI-B).